We begin with the raw amino-acid sequence, 572 residues long: Oxygen-dependent choline dehydrogenase (572 aa).

Residue 7-36 (DYIIIGAGSAGNVLATRLTEDRDVTVLLLE) participates in FAD binding. The active-site Proton acceptor is the His-474.

It belongs to the GMC oxidoreductase family. FAD is required as a cofactor.

It carries out the reaction choline + A = betaine aldehyde + AH2. It catalyses the reaction betaine aldehyde + NAD(+) + H2O = glycine betaine + NADH + 2 H(+). It functions in the pathway amine and polyamine biosynthesis; betaine biosynthesis via choline pathway; betaine aldehyde from choline (cytochrome c reductase route): step 1/1. Its function is as follows. Involved in the biosynthesis of the osmoprotectant glycine betaine. Catalyzes the oxidation of choline to betaine aldehyde and betaine aldehyde to glycine betaine at the same rate. The protein is Oxygen-dependent choline dehydrogenase of Paraburkholderia phymatum (strain DSM 17167 / CIP 108236 / LMG 21445 / STM815) (Burkholderia phymatum).